The primary structure comprises 248 residues: Geranylgeranylglyceryl phosphate synthase (248 aa).

Mg(2+)-binding residues include Asp-25 and Ser-50. Residues 170-176, 201-202, and 223-224 contribute to the sn-glycerol 1-phosphate site; these read YLEAGSG, GG, and GT.

This sequence belongs to the GGGP/HepGP synthase family. Group II subfamily. Mg(2+) serves as cofactor.

The protein resides in the cytoplasm. It carries out the reaction sn-glycerol 1-phosphate + (2E,6E,10E)-geranylgeranyl diphosphate = sn-3-O-(geranylgeranyl)glycerol 1-phosphate + diphosphate. The protein operates within membrane lipid metabolism; glycerophospholipid metabolism. In terms of biological role, prenyltransferase that catalyzes the transfer of the geranylgeranyl moiety of geranylgeranyl diphosphate (GGPP) to the C3 hydroxyl of sn-glycerol-1-phosphate (G1P). This reaction is the first ether-bond-formation step in the biosynthesis of archaeal membrane lipids. This Methanococcus aeolicus (strain ATCC BAA-1280 / DSM 17508 / OCM 812 / Nankai-3) protein is Geranylgeranylglyceryl phosphate synthase.